The following is a 261-amino-acid chain: Cytochrome c oxidase subunit 3 (261 aa).

Residues 1 to 15 (MAHQAHAYHMVDPSP) are Mitochondrial matrix-facing. Residues 16–34 (WPLTGAVAALLMTSGLAVW) form a helical membrane-spanning segment. The Mitochondrial intermembrane segment spans residues 35–40 (FHFHSM). A helical membrane pass occupies residues 41-66 (YLLYLGLTLLLLTMVQWWRDIIREGT). The Mitochondrial matrix segment spans residues 67 to 72 (FQGHHT). Residues 73-105 (PPVQKGLRYGMILFITSEVFFFLGFFWAFYHSS) form a helical membrane-spanning segment. The Mitochondrial intermembrane portion of the chain corresponds to 106–128 (LAPTPELGGCWPPTGIYPLDPFE). The chain crosses the membrane as a helical span at residues 129 to 152 (VPLLNTAVLLASGVTVTWAHHSLM). At 153-155 (EGN) the chain is on the mitochondrial matrix side. The helical transmembrane segment at 156–183 (RKEAIQALTLTVLLGFYFTALQAMEYYE) threads the bilayer. Residues 184 to 190 (APFTIAD) are Mitochondrial intermembrane-facing. A helical transmembrane segment spans residues 191–223 (GVYGSTFFVATGFHGLHVIIGSTFLMVCLLRQI). The Mitochondrial matrix portion of the chain corresponds to 224-232 (QYHFTSEHH). A helical transmembrane segment spans residues 233–256 (FGFERAAWYWHFVDVVWLFLYVSI). The Mitochondrial intermembrane portion of the chain corresponds to 257–261 (YWWGS).

The protein belongs to the cytochrome c oxidase subunit 3 family. In terms of assembly, component of the cytochrome c oxidase (complex IV, CIV), a multisubunit enzyme composed of 14 subunits. The complex is composed of a catalytic core of 3 subunits MT-CO1, MT-CO2 and MT-CO3, encoded in the mitochondrial DNA, and 11 supernumerary subunits COX4I, COX5A, COX5B, COX6A, COX6B, COX6C, COX7A, COX7B, COX7C, COX8 and NDUFA4, which are encoded in the nuclear genome. The complex exists as a monomer or a dimer and forms supercomplexes (SCs) in the inner mitochondrial membrane with NADH-ubiquinone oxidoreductase (complex I, CI) and ubiquinol-cytochrome c oxidoreductase (cytochrome b-c1 complex, complex III, CIII), resulting in different assemblies (supercomplex SCI(1)III(2)IV(1) and megacomplex MCI(2)III(2)IV(2)).

Its subcellular location is the mitochondrion inner membrane. The catalysed reaction is 4 Fe(II)-[cytochrome c] + O2 + 8 H(+)(in) = 4 Fe(III)-[cytochrome c] + 2 H2O + 4 H(+)(out). Its function is as follows. Component of the cytochrome c oxidase, the last enzyme in the mitochondrial electron transport chain which drives oxidative phosphorylation. The respiratory chain contains 3 multisubunit complexes succinate dehydrogenase (complex II, CII), ubiquinol-cytochrome c oxidoreductase (cytochrome b-c1 complex, complex III, CIII) and cytochrome c oxidase (complex IV, CIV), that cooperate to transfer electrons derived from NADH and succinate to molecular oxygen, creating an electrochemical gradient over the inner membrane that drives transmembrane transport and the ATP synthase. Cytochrome c oxidase is the component of the respiratory chain that catalyzes the reduction of oxygen to water. Electrons originating from reduced cytochrome c in the intermembrane space (IMS) are transferred via the dinuclear copper A center (CU(A)) of subunit 2 and heme A of subunit 1 to the active site in subunit 1, a binuclear center (BNC) formed by heme A3 and copper B (CU(B)). The BNC reduces molecular oxygen to 2 water molecules using 4 electrons from cytochrome c in the IMS and 4 protons from the mitochondrial matrix. The sequence is that of Cytochrome c oxidase subunit 3 (MT-CO3) from Squalus acanthias (Spiny dogfish).